The sequence spans 216 residues: Endo-1,4-beta-xylanase 2 (216 aa).

A signal peptide spans 1-27; the sequence is MVSFSSLFVAACAAVTAFALPNELEKR. Residues 28–216 form the GH11 domain; the sequence is AITSNEQGTN…SSGSASITVS (189 aa). N-linked (GlcNAc...) asparagine glycosylation is present at Asn87. Residue Glu112 is the Nucleophile of the active site. Residue Glu203 is the Proton donor of the active site.

The protein belongs to the glycosyl hydrolase 11 (cellulase G) family.

The protein localises to the secreted. It carries out the reaction Endohydrolysis of (1-&gt;4)-beta-D-xylosidic linkages in xylans.. It functions in the pathway glycan degradation; xylan degradation. Its function is as follows. Endo-1,4-beta-xylanase involved in the hydrolysis of xylan, a major structural heterogeneous polysaccharide found in plant biomass representing the second most abundant polysaccharide in the biosphere, after cellulose. The chain is Endo-1,4-beta-xylanase 2 (xyn2) from Rhizopus oryzae (Mucormycosis agent).